Here is a 393-residue protein sequence, read N- to C-terminus: CCA-adding enzyme (393 aa).

The ATP site is built by glycine 27 and arginine 30. CTP contacts are provided by glycine 27 and arginine 30. Positions 40 and 42 each coordinate Mg(2+). The ATP site is built by arginine 111, aspartate 154, arginine 157, arginine 160, and arginine 163. CTP contacts are provided by arginine 111, aspartate 154, arginine 157, arginine 160, and arginine 163.

It belongs to the tRNA nucleotidyltransferase/poly(A) polymerase family. Bacterial CCA-adding enzyme type 3 subfamily. In terms of assembly, homodimer. Requires Mg(2+) as cofactor.

It carries out the reaction a tRNA precursor + 2 CTP + ATP = a tRNA with a 3' CCA end + 3 diphosphate. The catalysed reaction is a tRNA with a 3' CCA end + 2 CTP + ATP = a tRNA with a 3' CCACCA end + 3 diphosphate. In terms of biological role, catalyzes the addition and repair of the essential 3'-terminal CCA sequence in tRNAs without using a nucleic acid template. Adds these three nucleotides in the order of C, C, and A to the tRNA nucleotide-73, using CTP and ATP as substrates and producing inorganic pyrophosphate. tRNA 3'-terminal CCA addition is required both for tRNA processing and repair. Also involved in tRNA surveillance by mediating tandem CCA addition to generate a CCACCA at the 3' terminus of unstable tRNAs. While stable tRNAs receive only 3'-terminal CCA, unstable tRNAs are marked with CCACCA and rapidly degraded. The protein is CCA-adding enzyme of Listeria monocytogenes serotype 4a (strain HCC23).